A 993-amino-acid polypeptide reads, in one-letter code: P3N-PIPO polyprotein (993 aa).

Positions 154 to 298 (GVTPYSVQQL…ESTMLSTHHY (145 aa)) constitute a Peptidase S30 domain. Active-site for P1 proteinase activity residues include histidine 207, aspartate 216, and serine 249. Positions 349-352 (KITC) match the Involved in interaction with stylet and aphid transmission motif. Positions 607-609 (PTK) match the Involved in virions binding and aphid transmission motif. Positions 633–755 (MYIAKSGYCY…DSEMKHYRVG (123 aa)) constitute a Peptidase C6 domain. Active-site for helper component proteinase activity residues include cysteine 641 and histidine 714.

It belongs to the potyviridae P3N-PIPO polyprotein family. As to quaternary structure, interacts (via PIPO domain) with host PCaP1 protein; this interaction may help to anchor the movement complex to the plasma membrane from which the complex could move to the plasmodesmata. In terms of processing, potyviral RNA is expressed as two polyproteins which undergo post-translational proteolytic processing. Genome polyprotein is processed by NIa-pro, P1 and HC-pro proteinases resulting in the production of at least ten individual proteins. P3N-PIPO is cleaved by P1 and HC-pro proteinases resulting in the production of three individual proteins. The P1 proteinase and the HC-pro cleave only their respective C-termini autocatalytically.

It localises to the host cell junction. Its subcellular location is the host plasmodesma. The enzyme catalyses Hydrolyzes a Gly-|-Gly bond at its own C-terminus, commonly in the sequence -Tyr-Xaa-Val-Gly-|-Gly, in the processing of the potyviral polyprotein.. Functionally, required for aphid transmission and also has proteolytic activity. Only cleaves a Gly-Gly dipeptide at its own C-terminus. Interacts with virions and aphid stylets. Acts as a suppressor of RNA-mediated gene silencing, also known as post-transcriptional gene silencing (PTGS), a mechanism of plant viral defense that limits the accumulation of viral RNAs. May have RNA-binding activity. Its function is as follows. Allows efficient cell to cell propagation, by bypassing the host cell wall barrier. Transports viral genome to neighboring plant cells directly through plasmosdesmata, without any budding. This is P3N-PIPO polyprotein from Solanum betaceum (Tamarillo).